The sequence spans 424 residues: Deoxyguanosinetriphosphate triphosphohydrolase-like protein (424 aa).

Residues 1–24 are disordered; that stretch reads MYPYSDADAFRRHPERAKSSQLRT. Over residues 8-18 the composition is skewed to basic and acidic residues; the sequence is DAFRRHPERAK. The 151-residue stretch at 67-217 folds into the HD domain; that stretch reads RLTHSLEVAQ…MDFSDDIAYS (151 aa).

It belongs to the dGTPase family. Type 2 subfamily.

This is Deoxyguanosinetriphosphate triphosphohydrolase-like protein from Corynebacterium glutamicum (strain R).